The following is an 831-amino-acid chain: ATP-dependent RNA helicase DBP7 (831 aa).

The span at 65–75 shows a compositional bias: polar residues; it reads ATDVNRTQLGQ. The tract at residues 65 to 180 is disordered; sequence ATDVNRTQLG…EPIEPSNAPL (116 aa). The segment covering 82–112 has biased composition (basic and acidic residues); it reads KSPEVHEDIDRPAKRARVSGDFRPKSNEKSA. The segment covering 146–162 has biased composition (polar residues); it reads VISSLFTYNPTSTTKTQ. The Q motif signature appears at 185–214; the sequence is DTFTSLGISTTLAAHLLKKMDLKAPTAIQK. A Helicase ATP-binding domain is found at 218–419; sequence TQLVKDDSDA…QISLKDAVHL (202 aa). 231-238 serves as a coordination point for ATP; that stretch reads AETGSGKT. The DEAD box motif lies at 353-356; it reads DEGD. Disordered stretches follow at residues 419–441 and 501–543; these read LRAD…SYAP and KNEK…SVTH. Residues 456–670 enclose the Helicase C-terminal domain; sequence RLVSLIAYLK…ITRQDADDIL (215 aa). A compositionally biased stretch (basic and acidic residues) spans 501-512; that stretch reads KNEKAEGTKDDT.

This sequence belongs to the DEAD box helicase family. DDX31/DBP7 subfamily.

It is found in the nucleus. Its subcellular location is the nucleolus. The enzyme catalyses ATP + H2O = ADP + phosphate + H(+). In terms of biological role, ATP-binding RNA helicase involved in the biogenesis of 60S ribosomal subunits and is required for the normal formation of 25S and 5.8S rRNAs. The polypeptide is ATP-dependent RNA helicase DBP7 (DBP7) (Phaeosphaeria nodorum (strain SN15 / ATCC MYA-4574 / FGSC 10173) (Glume blotch fungus)).